Here is a 552-residue protein sequence, read N- to C-terminus: MVLLISEIKDIAKRLTAAGDRKQYNSIIKLINELVIPENVTQLEEDETEKNLRFLVMSLFQIFRKLFSRGDLTLPSSKKSTLEKEQFVNWCRKVYEAFKTKLLAIISDIPFETSLGLDSLDVYLQLAELESTHFASEKGAPFFPNKTFRKLIIALWSSNMGEIEDVKSSGASENLIIVEFTEKYYTKFADIQYYFQSEFNQLLEDPAYQDLLLKNVGKWLALVNHDKHCSSVDADLEIFVPNPPQAIENESKFKSNFEKNWLSLLNGQLSLQQYKSILLILHKRIIPHFHTPTKLMDFLTDSYNLQSSNKNAGVVPILALNGLFELMKRFNLEYPNFYMKLYQIINPDLMHVKYRARFFRLMDVFLSSTHLSAHLVASFIKKLARLTLESPPSAIVTVIPFIYNLIRKHPNCMIMLHNPAFISNPFQTPDQVANLKTLKENYVDPFDVHESDPELTHALDSSLWELASLMEHYHPNVATLAKIFAQPFKKLSYNMEDFLDWNYDSLLNAESSRKLKTLPTLEFEAFTNVFDNEDGDSEASSQGNVYLPGVAW.

The protein belongs to the CBF/MAK21 family. In terms of assembly, interacts with NOP14 and MPP10. Interacts with snoRNA U3. Component of the ribosomal small subunit (SSU) processome composed of at least 40 protein subunits and snoRNA U3.

It is found in the nucleus. The protein localises to the nucleolus. Its function is as follows. Involved in nucleolar processing of pre-18S ribosomal RNA and ribosome assembly. Has a role in the nuclear export of 40S pre-ribosomal subunit to the cytoplasm. Its subcellular location and association with pre-40S subunit are unaffected by RPS19 disruptions, suggesting it acts before the ribosomal protein. This chain is Nucleolar complex protein 4 (NOC4), found in Saccharomyces cerevisiae (strain ATCC 204508 / S288c) (Baker's yeast).